The primary structure comprises 235 residues: Phosphoribosylaminoimidazole-succinocarboxamide synthase (235 aa).

Belongs to the SAICAR synthetase family.

It carries out the reaction 5-amino-1-(5-phospho-D-ribosyl)imidazole-4-carboxylate + L-aspartate + ATP = (2S)-2-[5-amino-1-(5-phospho-beta-D-ribosyl)imidazole-4-carboxamido]succinate + ADP + phosphate + 2 H(+). It functions in the pathway purine metabolism; IMP biosynthesis via de novo pathway; 5-amino-1-(5-phospho-D-ribosyl)imidazole-4-carboxamide from 5-amino-1-(5-phospho-D-ribosyl)imidazole-4-carboxylate: step 1/2. This chain is Phosphoribosylaminoimidazole-succinocarboxamide synthase, found in Streptococcus mutans serotype c (strain ATCC 700610 / UA159).